The primary structure comprises 430 residues: tRNA(Ile)-lysidine synthase (430 aa).

24 to 29 (SGGLDS) contacts ATP.

Belongs to the tRNA(Ile)-lysidine synthase family.

The protein localises to the cytoplasm. The enzyme catalyses cytidine(34) in tRNA(Ile2) + L-lysine + ATP = lysidine(34) in tRNA(Ile2) + AMP + diphosphate + H(+). In terms of biological role, ligates lysine onto the cytidine present at position 34 of the AUA codon-specific tRNA(Ile) that contains the anticodon CAU, in an ATP-dependent manner. Cytidine is converted to lysidine, thus changing the amino acid specificity of the tRNA from methionine to isoleucine. The polypeptide is tRNA(Ile)-lysidine synthase (Haemophilus influenzae (strain PittGG)).